Reading from the N-terminus, the 1738-residue chain is Sodium leak channel NALCN (1738 aa).

Topologically, residues 1-36 are cytoplasmic; the sequence is MLKRKQSSRVEAQPVTDFGPDESLSDNADILWINKP. A helical membrane pass occupies residues 37 to 57; the sequence is WVHSLLRICAIISVISVCMNT. Over 58 to 65 the chain is Extracellular; sequence PMTFEHYP. A helical transmembrane segment spans residues 66-90; it reads PLQYVTFTLDTLLMFLYTAEMIAKM. Residues 91–106 lie on the Cytoplasmic side of the membrane; that stretch reads HIRGIVKGDSSYVKDR. Residues 107–129 traverse the membrane as a helical segment; it reads WCVFDGFMVFCLWVSLVLQVFEI. Topologically, residues 130–137 are extracellular; sequence ADIVDQMS. Residues 138-158 form a helical; Voltage-sensor membrane-spanning segment; that stretch reads PWGMLRIPRPLIMIRAFRIYF. Residues 159 to 173 are Cytoplasmic-facing; it reads RFELPRTRITNILKR. Residues 174–199 form a helical membrane-spanning segment; it reads SGEQIWSVSIFLLFFLLLYGILGVQM. The Extracellular portion of the chain corresponds to 200 to 269; it reads FGTFTYHCVV…YSGFNEIGTS (70 aa). 2 disulfides stabilise this stretch: C207–C239 and C229–C245. Residues N210 and N216 are each glycosylated (N-linked (GlcNAc...) asparagine). An intramembrane region (pore-forming) is located at residues 270 to 289; that stretch reads IFTVYEAASQEGWVFLMYRA. Over 290 to 294 the chain is Extracellular; it reads IDSFP. The helical transmembrane segment at 295–322 threads the bilayer; that stretch reads RWRSYFYFITLIFFLAWLVKNVFIAVII. Over 323-382 the chain is Cytoplasmic; sequence ETFAEIRVQFQQMWGSRSSTTSTATTQMFHEDAAGGWQLVAVDVNKPQGRAPACLQKMMR. Residues 383–403 form a helical membrane-spanning segment; the sequence is SSVFHMFILSMVTVDVIVAAS. Residues 404 to 416 lie on the Extracellular side of the membrane; it reads NYYKGENFRRQYD. Residues 417–439 form a helical membrane-spanning segment; that stretch reads EFYLAEVAFTVLFDLEALLKIWC. Over 440–447 the chain is Cytoplasmic; the sequence is LGFTGYIS. Residues 448–468 traverse the membrane as a helical segment; the sequence is SSLHKFELLLVIGTTLHVYPD. Residues 469-472 lie on the Extracellular side of the membrane; that stretch reads LYHS. The helical; Voltage-sensor transmembrane segment at 473–492 threads the bilayer; that stretch reads QFTYFQVLRVVRLIKISPAL. Over 493–502 the chain is Cytoplasmic; the sequence is EDFVYKIFGP. The helical transmembrane segment at 503-530 threads the bilayer; that stretch reads GKKLGSLVVFTASLLIVMSAISLQMFCF. Topologically, residues 531–543 are extracellular; sequence VEELDRFTTFPRA. The segment at residues 544-563 is an intramembrane region (pore-forming); the sequence is FMSMFQILTQEGWVDVMDQT. Over 564–569 the chain is Extracellular; it reads LNAVGH. A helical transmembrane segment spans residues 570 to 599; that stretch reads MWAPVVAIYFILYHLFATLILLSLFVAVIL. At 600 to 886 the chain is on the cytoplasmic side; that stretch reads DNLELDEDLK…QLYDLLGLVT (287 aa). A disordered region spans residues 762–785; sequence QERRSLRHGSNSQRISRGKSLETL. A coiled-coil region spans residues 795–830; that stretch reads YRNAQREDSEIKMIQEKKEQAEMKRKVQEEELRENH. Residues 887 to 906 form a helical membrane-spanning segment; it reads YLDWVMIIVTICSCISMMFE. Over 907-915 the chain is Extracellular; the sequence is SPFRRVMHA. A helical transmembrane segment spans residues 916 to 939; it reads PTLQIAEYVFVIFMSIELNLKIMA. Over 940–947 the chain is Cytoplasmic; that stretch reads DGLFFTPT. Residues 948 to 972 form a helical membrane-spanning segment; that stretch reads AVIRDFGGVMDIFIYLVSLIFLCWM. Over 973–980 the chain is Extracellular; sequence PQNVPAES. The chain crosses the membrane as a helical; Voltage-sensor span at residues 981–1003; it reads GAQLLMVLRCLRPLRIFKLVPQM. The Cytoplasmic segment spans residues 1004–1015; sequence RKVVRELFSGFK. The helical transmembrane segment at 1016–1039 threads the bilayer; it reads EIFLVSILLLTLMLVFASFGVQLF. Residues 1040-1104 are Extracellular-facing; that stretch reads AGKLAKCNDP…NFNFDNVGNA (65 aa). Cysteines 1046 and 1057 form a disulfide. N1064 carries an N-linked (GlcNAc...) asparagine glycan. The segment at residues 1105–1124 is an intramembrane region (pore-forming); sequence MLALFEVLSLKGWVEVRDVI. The Extracellular portion of the chain corresponds to 1125–1129; that stretch reads IHRVG. Residues 1130–1159 form a helical membrane-spanning segment; the sequence is PIHGIYIHVFVFLGCMIGLTLFVGVVIANF. Residues 1160–1210 lie on the Cytoplasmic side of the membrane; it reads NENKGTALLTVDQRRWEDLKSRLKIAQPLHLPPRPDNDGFRAKMYDITQHP. A helical membrane pass occupies residues 1211–1227; it reads FFKRTIALLVLAQSVLL. The Extracellular segment spans residues 1228–1236; the sequence is SVKWDVEDP. A helical transmembrane segment spans residues 1237-1260; sequence VTVPLATMSVVFTFIFVLEVTMKI. The Cytoplasmic portion of the chain corresponds to 1261–1271; it reads IAMSPAGFWQS. The chain crosses the membrane as a helical span at residues 1272 to 1293; that stretch reads RRNRYDLLVTSLGVVWVVLHFA. Residues 1294–1296 lie on the Extracellular side of the membrane; it reads LLN. Residues 1297–1318 form a helical; Voltage-sensor membrane-spanning segment; it reads AYTYMMGACVIVFRFFSICGKH. Over 1319–1331 the chain is Cytoplasmic; sequence VTLKMLLLTVVVS. The helical transmembrane segment at 1332–1357 threads the bilayer; sequence MYKSFFIIVGMFLLLLCYAFAGVVLF. Topologically, residues 1358–1378 are extracellular; it reads GTVKYGENINRHANFSSAGKA. An intramembrane region (pore-forming) is located at residues 1379-1398; that stretch reads ITVLFRIVTGEDWNKIMHDC. The Extracellular portion of the chain corresponds to 1399 to 1420; it reads MVQPPFCTPDEFTYWATDCGNY. A disulfide bond links C1405 and C1417. The helical transmembrane segment at 1421–1447 threads the bilayer; it reads AGALMYFCSFYVIIAYIMLNLLVAIIV. Over 1448-1738 the chain is Cytoplasmic; it reads ENFSLFYSTE…DESGDDLLDI (291 aa). A disordered region spans residues 1611-1678; the sequence is PPSIETTQPS…QWRLPSAPKP (68 aa). Positions 1613 to 1632 are enriched in polar residues; sequence SIETTQPSEDTNANSQDNSM. Low complexity predominate over residues 1633 to 1648; that stretch reads QPETSSQQQLLSPTLS.

Belongs to the NALCN family. Found in a complex with NALCN, UNC79, UNC80 and NACL1; these auxiliary subunits are indispensable for the function of NALCN channel. Interacts with UNC80; required for the NALCN activation/inhibition by GPCRs in neurons. Found in a complex with NALCN, UNC79 and UNC80; UNC80 bridges NALCN to UNC79. Interacts with CHRM3. Phosphorylated on tyrosine residues.

The protein resides in the cell membrane. The enzyme catalyses Na(+)(in) = Na(+)(out). Its activity is regulated as follows. Inhibited by low micromolar concentrations of Gd(3+) and high micromolar concentrations of verapamil. Insensitive to tetrodotoxin (TTX) and potentiated by low external Ca(2+) concentration. Its function is as follows. Voltage-gated ion channel responsible for the resting Na(+) permeability that controls neuronal excitability. NALCN channel functions as a multi-protein complex, which consists at least of NALCN, NALF1, UNC79 and UNC80. NALCN is the voltage-sensing, pore-forming subunit of the NALCN channel complex. NALCN channel complex is constitutively active and conducts monovalent cations but is blocked by physiological concentrations of extracellular divalent cations. In addition to its role in regulating neuronal excitability, is required for normal respiratory rhythm, systemic osmoregulation by controlling the serum sodium concentration and in the regulation of the intestinal pace-making activity in the interstitial cells of Cajal. NALCN channel is also activated by neuropeptides such as neurotensin and substance P (SP) through a SRC family kinases-dependent pathway. In addition, NALCN activity is enhanced/modulated by several GPCRs, such as CHRM3. In Homo sapiens (Human), this protein is Sodium leak channel NALCN.